The chain runs to 352 residues: C-C chemokine receptor type 5 (352 aa).

Topologically, residues 1–30 (MDYQVSSPTYDIDYYTSEPCQKIKVKQIAA) are extracellular. Tyr-3 is modified (sulfotyrosine). 2 O-linked (GalNAc...) serine glycosylation sites follow: Ser-6 and Ser-7. Tyr-10, Tyr-14, and Tyr-15 each carry sulfotyrosine. Disulfide bonds link Cys-20–Cys-269 and Cys-101–Cys-178. A helical membrane pass occupies residues 31-58 (RLLPPLYSLVFIFGFVGNILVVLILINC). The Cytoplasmic segment spans residues 59 to 68 (KRLKSMTDIY). The helical transmembrane segment at 69-89 (LLNLAISDLLFLLTVPFWAHY) threads the bilayer. Residues 90–102 (AAAQWDFGNTMCQ) lie on the Extracellular side of the membrane. Residues 103–124 (LLTGLYFIGFFSGIFFIILLTI) form a helical membrane-spanning segment. Residues 125–141 (DRYLAIVHAVFALKART) lie on the Cytoplasmic side of the membrane. A helical membrane pass occupies residues 142 to 166 (VTFGVVTSVITWVVAVFASLPRIIF). The Extracellular portion of the chain corresponds to 167 to 198 (TRSQREGLHYTCSSHFPYSQYQFWKNFQTLKI). The chain crosses the membrane as a helical span at residues 199–218 (VILGLVLPLLVMVICYSGIL). The Cytoplasmic segment spans residues 219–235 (KTLLRCRNDKKRHRAVR). A helical membrane pass occupies residues 236–260 (LIFTIMIVYFLFWAPYNIVLLLNTF). Over 261–277 (QEFFGLNNCSSSNRLDQ) the chain is Extracellular. A helical membrane pass occupies residues 278–301 (AMQVTETLGMTHCCINPIIYAFVG). The Cytoplasmic segment spans residues 302-352 (EKFRNYLLVFFQKHIAKRFCKCCSIFQQDAPERASSVYTRSTGEQETSVGL). 3 S-palmitoyl cysteine lipidation sites follow: Cys-321, Cys-323, and Cys-324. A phosphoserine; by BARK1 mark is found at Ser-336, Ser-337, Ser-342, and Ser-349.

The protein belongs to the G-protein coupled receptor 1 family. In terms of assembly, interacts with PRAF2. Efficient ligand binding to CCL3/MIP-1alpha and CCL4/MIP-1beta requires sulfation, O-glycosylation and sialic acid modifications. Glycosylation on Ser-6 is required for efficient binding of CCL4. Interacts with GRK2. Interacts with ARRB1 and ARRB2. Interacts with CNIH4. Interacts with S100A4; this interaction stimulates T-lymphocyte chemotaxis. Sulfated on at least 2 of the N-terminal tyrosines. Sulfation is required for efficient binding of the chemokines, CCL3 and CCL4. Post-translationally, palmitoylation in the C-terminal is important for cell surface expression. In terms of processing, phosphorylation on serine residues in the C-terminal is stimulated by binding CC chemokines especially by APO-RANTES. O-glycosylated, but not N-glycosylated. Ser-6 appears to be the major site even if Ser-7 may be also O-glycosylated. Also sialylated glycans present which contribute to chemokine binding. Thr-16 and Ser-17 may also be glycosylated and, if so, with small moieties such as a T-antigen.

The protein resides in the cell membrane. Its function is as follows. Receptor for a number of inflammatory CC-chemokines including CCL3/MIP-1-alpha, CCL4/MIP-1-beta and RANTES and subsequently transduces a signal by increasing the intracellular calcium ion level. May play a role in the control of granulocytic lineage proliferation or differentiation. Participates in T-lymphocyte migration to the infection site by acting as a chemotactic receptor. This Chlorocebus sabaeus (Green monkey) protein is C-C chemokine receptor type 5 (CCR5).